Reading from the N-terminus, the 731-residue chain is 1,4-alpha-glucan branching enzyme GlgB (731 aa).

Asp-408 functions as the Nucleophile in the catalytic mechanism. Catalysis depends on Glu-461, which acts as the Proton donor.

The protein belongs to the glycosyl hydrolase 13 family. GlgB subfamily. Monomer.

It carries out the reaction Transfers a segment of a (1-&gt;4)-alpha-D-glucan chain to a primary hydroxy group in a similar glucan chain.. The protein operates within glycan biosynthesis; glycogen biosynthesis. Its function is as follows. Catalyzes the formation of the alpha-1,6-glucosidic linkages in glycogen by scission of a 1,4-alpha-linked oligosaccharide from growing alpha-1,4-glucan chains and the subsequent attachment of the oligosaccharide to the alpha-1,6 position. In Corynebacterium efficiens (strain DSM 44549 / YS-314 / AJ 12310 / JCM 11189 / NBRC 100395), this protein is 1,4-alpha-glucan branching enzyme GlgB.